Consider the following 266-residue polypeptide: UPF0354 protein LMHCC_0955 (266 aa).

Belongs to the UPF0354 family.

In Listeria monocytogenes serotype 4a (strain HCC23), this protein is UPF0354 protein LMHCC_0955.